The sequence spans 319 residues: MQASLIAFMISLVLSALLFPWLIIWMRSHDEGQQIRDEGPKWHEKKSGTPTMGGTVFVLSAAVATVAICAYKGQLSKTVWILLVALLGYGIIGFLDDGLKLFFKRNLGLRAWQKMDLQLLVAAGIVLLAASDNFDFALYLPFAGVVKNVVLFTLFEVFWLVGFSNAVNLSDGLDGLATGLSFIAYGTYAWLAFKSQNFGVLVFCMAVMGGLAAFFMFNHKPAKIFMGDAGSLALGGGLAAVSIFLGRPWSLLLVGIVFVCETASVILQVASFKTTGKRIFKMTPIHHHFEMLGWSEWKVDLVFWLVGLVGSGIYLMIWG.

The next 9 helical transmembrane spans lie at Leu5 to Trp25, Thr51 to Tyr71, Val79 to Leu99, Leu119 to Tyr139, Val149 to Leu169, Leu173 to Phe193, Asn197 to Phe217, Ile224 to Gly246, and Val299 to Gly319.

It belongs to the glycosyltransferase 4 family. MraY subfamily. It depends on Mg(2+) as a cofactor.

It localises to the cell membrane. The enzyme catalyses UDP-N-acetyl-alpha-D-muramoyl-L-alanyl-gamma-D-glutamyl-L-lysyl-D-alanyl-D-alanine + di-trans,octa-cis-undecaprenyl phosphate = Mur2Ac(oyl-L-Ala-gamma-D-Glu-L-Lys-D-Ala-D-Ala)-di-trans,octa-cis-undecaprenyl diphosphate + UMP. It functions in the pathway cell wall biogenesis; peptidoglycan biosynthesis. Its function is as follows. Catalyzes the initial step of the lipid cycle reactions in the biosynthesis of the cell wall peptidoglycan: transfers peptidoglycan precursor phospho-MurNAc-pentapeptide from UDP-MurNAc-pentapeptide onto the lipid carrier undecaprenyl phosphate, yielding undecaprenyl-pyrophosphoryl-MurNAc-pentapeptide, known as lipid I. The sequence is that of Phospho-N-acetylmuramoyl-pentapeptide-transferase from Lactobacillus delbrueckii subsp. bulgaricus (strain ATCC BAA-365 / Lb-18).